Reading from the N-terminus, the 242-residue chain is Uridylate kinase (242 aa).

11–14 (KLSG) lines the ATP pocket. G53 lines the UMP pocket. ATP-binding residues include G54 and R58. Residues D73 and 134 to 141 (SGNPFFTT) contribute to the UMP site. Positions 161, 167, and 170 each coordinate ATP.

Belongs to the UMP kinase family. As to quaternary structure, homohexamer.

The protein localises to the cytoplasm. It catalyses the reaction UMP + ATP = UDP + ADP. Its pathway is pyrimidine metabolism; CTP biosynthesis via de novo pathway; UDP from UMP (UMPK route): step 1/1. Its activity is regulated as follows. Inhibited by UTP. In terms of biological role, catalyzes the reversible phosphorylation of UMP to UDP. The polypeptide is Uridylate kinase (Thermosynechococcus vestitus (strain NIES-2133 / IAM M-273 / BP-1)).